Here is a 730-residue protein sequence, read N- to C-terminus: Heterogeneous nuclear ribonucleoprotein M (730 aa).

Positions 1 to 13 (MAAGVEAAAEVAA) are enriched in low complexity. The disordered stretch occupies residues 1–62 (MAAGVEAAAE…NIKRGGNRFE (62 aa)). At alanine 2 the chain carries N-acetylalanine. Lysine 17 is covalently cross-linked (Glycyl lysine isopeptide (Lys-Gly) (interchain with G-Cter in SUMO2)). At serine 29 the chain carries Phosphoserine. Lysine 37 is covalently cross-linked (Glycyl lysine isopeptide (Lys-Gly) (interchain with G-Cter in SUMO2)). Residues 38 to 50 (GEGERPAQNEKRK) show a composition bias toward basic and acidic residues. Residues lysine 69 and lysine 83 each participate in a glycyl lysine isopeptide (Lys-Gly) (interchain with G-Cter in SUMO2) cross-link. RRM domains follow at residues 71 to 149 (YRAF…EDPD) and 204 to 281 (STVF…MDER). Serine 86 carries the post-translational modification Phosphoserine. Residues lysine 88 and lysine 127 each participate in a glycyl lysine isopeptide (Lys-Gly) (interchain with G-Cter in SUMO2) cross-link. An N6-acetyllysine; alternate modification is found at lysine 134. Residue lysine 134 forms a Glycyl lysine isopeptide (Lys-Gly) (interchain with G-Cter in SUMO2); alternate linkage. Residues lysine 143 and lysine 145 each participate in a glycyl lysine isopeptide (Lys-Gly) (interchain with G-Cter in SUMO2) cross-link. Phosphoserine is present on serine 204. Lysine 221 participates in a covalent cross-link: Glycyl lysine isopeptide (Lys-Gly) (interchain with G-Cter in SUMO2). The residue at position 277 (lysine 277) is an N6-acetyllysine; alternate. A Glycyl lysine isopeptide (Lys-Gly) (interchain with G-Cter in SUMO2); alternate cross-link involves residue lysine 277. Glycyl lysine isopeptide (Lys-Gly) (interchain with G-Cter in SUMO2) cross-links involve residues lysine 285 and lysine 345. 2 positions are modified to phosphoserine: serine 365 and serine 377. Residues lysine 381 and lysine 388 each participate in a glycyl lysine isopeptide (Lys-Gly) (interchain with G-Cter in SUMO2) cross-link. The residue at position 397 (serine 397) is a Phosphoserine. Tandem repeats lie at residues 400–405 (GIERMG), 407–412 (GIDRLG), 415–420 (GMERMG), and 426–431 (GMDRVG). The tract at residues 400-608 (GIERMGPGID…ALGAGIERMG (209 aa)) is 27 X 6 AA repeats of [GEVSTPAN]-[ILMV]-[DE]-[RH]-[MLVI]-[GAV]. At serine 432 the chain carries Phosphoserine. 3 repeat units span residues 433–438 (EIERMG), 440–445 (VMDRMG), and 446–451 (SVERMG). Serine 452 bears the Phosphoserine mark. Repeat copies occupy residues 453 to 458 (GIERMG), 461 to 466 (GLDHMA), 468 to 473 (SIERMG), and 475 to 480 (TMERIG). Position 468 is a phosphoserine (serine 468). At serine 481 the chain carries Phosphoserine. 16 repeat units span residues 482–487 (GVERMG), 493–498 (GLERMA), 500–505 (PIDRVG), 507–512 (TIERMG), 514–519 (GVERMG), 521–526 (AIERMG), 528–533 (SMERMV), 540–545 (GLERMG), 547–552 (VMDRMA), 554–559 (GLERMG), 562–566 (NLERM), 567–572 (GLERMG), 575–579 (SLERM), 580–585 (GLERMG), 588–593 (SLERMG), and 603–608 (GIERMG). Position 496 is an omega-N-methylarginine (arginine 496). A Phosphoserine modification is found at serine 528. Position 575 is a phosphoserine (serine 575). Serine 588 is modified (phosphoserine). A phosphoserine mark is found at serine 618, serine 633, and serine 637. Residue lysine 651 forms a Glycyl lysine isopeptide (Lys-Gly) (interchain with G-Cter in SUMO2) linkage. The RRM 3 domain maps to 653 to 729 (CQIFVRNLPF…REIDVRIDRN (77 aa)). Threonine 665 is subject to Phosphothreonine. Lysine 667 is covalently cross-linked (Glycyl lysine isopeptide (Lys-Gly) (interchain with G-Cter in SUMO2)). Lysine 672 bears the N6-acetyllysine mark. Residues lysine 685 and lysine 692 each participate in a glycyl lysine isopeptide (Lys-Gly) (interchain with G-Cter in SUMO2) cross-link. Residue lysine 698 is modified to N6-acetyllysine; alternate. A Glycyl lysine isopeptide (Lys-Gly) (interchain with G-Cter in SUMO2); alternate cross-link involves residue lysine 698. Lysine 698 participates in a covalent cross-link: Glycyl lysine isopeptide (Lys-Gly) (interchain with G-Cter in SUMO1); alternate. A Phosphoserine modification is found at serine 701. Lysine 716 participates in a covalent cross-link: Glycyl lysine isopeptide (Lys-Gly) (interchain with G-Cter in SUMO2).

As to quaternary structure, identified in the spliceosome C complex. Interacts with PPIA/CYPA. Post-translationally, sumoylated.

The protein localises to the nucleus. It is found in the nucleolus. Its function is as follows. Pre-mRNA binding protein in vivo, binds avidly to poly(G) and poly(U) RNA homopolymers in vitro. Involved in splicing. Acts as a receptor for carcinoembryonic antigen in Kupffer cells, may initiate a series of signaling events leading to tyrosine phosphorylation of proteins and induction of IL-1 alpha, IL-6, IL-10 and tumor necrosis factor alpha cytokines. This chain is Heterogeneous nuclear ribonucleoprotein M (HNRNPM), found in Homo sapiens (Human).